The chain runs to 744 residues: CCR4-NOT transcription complex subunit 10 (744 aa).

Positions 1 to 16 (MAADKPADQGAEKHEG) are enriched in basic and acidic residues. The interval 1-25 (MAADKPADQGAEKHEGTGQSSGITD) is disordered. Alanine 2 is modified (N-acetylalanine). Positions 74–107 (KSNQTTTDNLRQTLNQLKNQVHSAVEEMDGLDDV) form a coiled coil. The segment covering 183-199 (NNNKNGKNETGNNNNKD) has biased composition (low complexity). Disordered stretches follow at residues 183–204 (NNNK…SNHK), 477–521 (QDPK…PPSS), and 602–634 (VSLG…PQCY). Residues 484-495 (GAKNSNQLGGNT) show a composition bias toward polar residues. Over residues 496–506 (ESSESSETCSS) the composition is skewed to low complexity. The span at 602–612 (VSLGISSNEQD) shows a compositional bias: polar residues.

The protein belongs to the CNOT10 family. In terms of assembly, component of the CCR4-NOT complex; distinct complexes seem to exist that differ in the participation of probably mutually exclusive catalytic subunits. CNOT10 and CNOT11 form a subcomplex docked to the CNOT1 scaffold.

It localises to the cytoplasm. It is found in the nucleus. Functionally, component of the CCR4-NOT complex which is one of the major cellular mRNA deadenylases and is linked to various cellular processes including bulk mRNA degradation, miRNA-mediated repression, translational repression during translational initiation and general transcription regulation. Additional complex functions may be a consequence of its influence on mRNA expression. Is not required for association of CNOT7 to the CCR4-NOT complex. The chain is CCR4-NOT transcription complex subunit 10 (CNOT10) from Macaca fascicularis (Crab-eating macaque).